We begin with the raw amino-acid sequence, 206 residues long: Small ribosomal subunit protein uS4 (206 aa).

Residues 94–157 (RRLDNVVYRL…RRRTYFKNLI (64 aa)) form the S4 RNA-binding domain.

This sequence belongs to the universal ribosomal protein uS4 family. As to quaternary structure, part of the 30S ribosomal subunit. Contacts protein S5. The interaction surface between S4 and S5 is involved in control of translational fidelity.

Its function is as follows. One of the primary rRNA binding proteins, it binds directly to 16S rRNA where it nucleates assembly of the body of the 30S subunit. Functionally, with S5 and S12 plays an important role in translational accuracy. The sequence is that of Small ribosomal subunit protein uS4 from Roseiflexus sp. (strain RS-1).